Reading from the N-terminus, the 150-residue chain is UPF0178 protein AZOSEA36080 (150 aa).

This sequence belongs to the UPF0178 family.

In Aromatoleum aromaticum (strain DSM 19018 / LMG 30748 / EbN1) (Azoarcus sp. (strain EbN1)), this protein is UPF0178 protein AZOSEA36080.